A 486-amino-acid chain; its full sequence is Glutamyl-tRNA(Gln) amidotransferase subunit A (486 aa).

Catalysis depends on charge relay system residues K75 and S150. Residue S174 is the Acyl-ester intermediate of the active site.

This sequence belongs to the amidase family. GatA subfamily. In terms of assembly, heterotrimer of A, B and C subunits.

The catalysed reaction is L-glutamyl-tRNA(Gln) + L-glutamine + ATP + H2O = L-glutaminyl-tRNA(Gln) + L-glutamate + ADP + phosphate + H(+). Allows the formation of correctly charged Gln-tRNA(Gln) through the transamidation of misacylated Glu-tRNA(Gln) in organisms which lack glutaminyl-tRNA synthetase. The reaction takes place in the presence of glutamine and ATP through an activated gamma-phospho-Glu-tRNA(Gln). In Nostoc sp. (strain PCC 7120 / SAG 25.82 / UTEX 2576), this protein is Glutamyl-tRNA(Gln) amidotransferase subunit A.